A 94-amino-acid chain; its full sequence is MLKPLGNRVIIEKKEQEQAAKSGIVLTDSAKEKSNEGVIIAVGQGRLLDNGTQVAPQVSEGDTIVFQQYAGTEVKRGAQTYLILNEEDILAIIE.

This sequence belongs to the GroES chaperonin family. As to quaternary structure, heptamer of 7 subunits arranged in a ring. Interacts with the chaperonin GroEL.

The protein resides in the cytoplasm. Functionally, together with the chaperonin GroEL, plays an essential role in assisting protein folding. The GroEL-GroES system forms a nano-cage that allows encapsulation of the non-native substrate proteins and provides a physical environment optimized to promote and accelerate protein folding. GroES binds to the apical surface of the GroEL ring, thereby capping the opening of the GroEL channel. The sequence is that of Co-chaperonin GroES from Staphylococcus epidermidis.